The chain runs to 253 residues: Chloride intracellular channel protein 4 (253 aa).

The residue at position 2 (A2) is an N-acetylalanine. The required for insertion into the membrane stretch occupies residues A2 to P101. S4 carries the post-translational modification Phosphoserine. At K24 the chain carries N6-acetyllysine. The chain crosses the membrane as a helical span at residues F37–V57. Positions N81 to Y244 constitute a GST C-terminal domain. The residue at position 130 (K130) is an N6-acetyllysine. S132, S167, and S236 each carry phosphoserine. Y244 is modified (phosphotyrosine).

This sequence belongs to the chloride channel CLIC family. Monomer. Interacts with HRH3.

The protein localises to the cytoplasm. It is found in the cytoskeleton. It localises to the microtubule organizing center. The protein resides in the centrosome. Its subcellular location is the cytoplasmic vesicle membrane. The protein localises to the nucleus. It is found in the cell membrane. It localises to the mitochondrion. The protein resides in the cell junction. It carries out the reaction chloride(in) = chloride(out). It catalyses the reaction thiocyanate(in) = thiocyanate(out). The catalysed reaction is nitrate(in) = nitrate(out). The enzyme catalyses iodide(out) = iodide(in). It carries out the reaction bromide(in) = bromide(out). It catalyses the reaction fluoride(in) = fluoride(out). The catalysed reaction is choline(out) = choline(in). Functionally, in the soluble state, catalyzes glutaredoxin-like thiol disulfide exchange reactions with reduced glutathione as electron donor. Can insert into membranes and form voltage-dependent multi-ion conductive channels. Membrane insertion seems to be redox-regulated and may occur only under oxidizing conditions. Has alternate cellular functions like a potential role in angiogenesis or in maintaining apical-basolateral membrane polarity during mitosis and cytokinesis. Could also promote endothelial cell proliferation and regulate endothelial morphogenesis (tubulogenesis). Promotes cell-surface expression of HRH3. The protein is Chloride intracellular channel protein 4 (CLIC4) of Pongo abelii (Sumatran orangutan).